We begin with the raw amino-acid sequence, 108 residues long: Parvalbumin beta (108 aa).

N-acetylalanine is present on Ala-1. Cysteines 11 and 33 form a disulfide. EF-hand domains follow at residues 38-73 (KSADDIKKAFVFIDQDKSGFIEEDELKLFLQVFKAG) and 77-108 (LTDAETKAFLKAGDSDGDGAIGVEEWVALVKA). Ca(2+) contacts are provided by Asp-51, Asp-53, Ser-55, Phe-57, Glu-59, Glu-62, Asp-90, Asp-92, Asp-94, Ala-96, and Glu-101.

This sequence belongs to the parvalbumin family.

In terms of biological role, in muscle, parvalbumin is thought to be involved in relaxation after contraction. It binds two calcium ions. The protein is Parvalbumin beta of Merlangius merlangus (Whiting).